Here is a 111-residue protein sequence, read N- to C-terminus: Fertilization-influencing membrane protein (111 aa).

Positions 1–23 (MKLWLWVAVGVWMLMAELGTIET) are cleaved as a signal peptide. The helical transmembrane segment at 85 to 105 (ILVGTLVVAFFFLLFQFCLHV) threads the bilayer.

As to expression, testis-specific.

It localises to the cell membrane. Its subcellular location is the secreted. Plays a role in sperm-oocyte fusion process during fertilization. In Mus musculus (Mouse), this protein is Fertilization-influencing membrane protein.